Reading from the N-terminus, the 190-residue chain is Ribosome-recycling factor (190 aa).

It belongs to the RRF family.

The protein resides in the cytoplasm. Responsible for the release of ribosomes from messenger RNA at the termination of protein biosynthesis. May increase the efficiency of translation by recycling ribosomes from one round of translation to another. This chain is Ribosome-recycling factor, found in Fusobacterium nucleatum subsp. nucleatum (strain ATCC 25586 / DSM 15643 / BCRC 10681 / CIP 101130 / JCM 8532 / KCTC 2640 / LMG 13131 / VPI 4355).